The following is a 305-amino-acid chain: Ornithine carbamoyltransferase (305 aa).

Carbamoyl phosphate-binding positions include 53–56 (STRT), Gln80, Arg104, and 131–134 (HPCQ). L-ornithine contacts are provided by residues Asn162, Asp219, and 223–224 (SM). Carbamoyl phosphate-binding positions include 259–260 (CL) and Arg287.

The protein belongs to the aspartate/ornithine carbamoyltransferase superfamily. OTCase family.

The protein resides in the cytoplasm. The catalysed reaction is carbamoyl phosphate + L-ornithine = L-citrulline + phosphate + H(+). It functions in the pathway amino-acid biosynthesis; L-arginine biosynthesis; L-arginine from L-ornithine and carbamoyl phosphate: step 1/3. Functionally, reversibly catalyzes the transfer of the carbamoyl group from carbamoyl phosphate (CP) to the N(epsilon) atom of ornithine (ORN) to produce L-citrulline. The polypeptide is Ornithine carbamoyltransferase (Psychrobacter cryohalolentis (strain ATCC BAA-1226 / DSM 17306 / VKM B-2378 / K5)).